The following is a 308-amino-acid chain: GTPase IMAP family member 5 (308 aa).

Residues 1–283 are Cytoplasmic-facing; the sequence is MEHLQKSTYG…VKSCWSSHTA (283 aa). The region spanning 24 to 227 is the AIG1-type G domain; it reads SSCLRILLVG…HSNDLFLHAE (204 aa). Residues 33–41, serine 54, 151–153, and asparagine 188 each bind GTP; these read GKSGCGKSA and RKE. A helical; Anchor for type IV membrane protein transmembrane segment spans residues 284–304; sequence ACALLIVLGLTLLTTFINLCI. At 305–308 the chain is on the mitochondrial intermembrane side; sequence SRCK.

Belongs to the TRAFAC class TrmE-Era-EngA-EngB-Septin-like GTPase superfamily. AIG1/Toc34/Toc159-like paraseptin GTPase family. IAN subfamily. Interacts with BAD, BAK1, BAX, BCL2, BCL2L1/Bcl-xL and BCL2L11/BimEL. The interaction with BAX is increased, when cells initiate apoptosis upon IL2 withdrawal. Forms a complex with BCL2L1 or MCL1 and HSPA8/HSC70; the interaction between HSPA8 and BCL2L1 or MCL1 is impaired in the absence of GIMAP5. May interact (via N-terminus) with microtubules. Expressed in thymus (in thymocytes), spleen (in splenocytes), lymph node and lung. Highly expressed in T lymphocytes. Expressed in B cells and in distinct lineages of hematopoietic bone marrow cells, including natural killer, B, T, myeloid and erythroid lineages. Expressed in liver endothelial cells.

The protein resides in the lysosome. It is found in the lysosome membrane. The protein localises to the endosome. It localises to the multivesicular body membrane. Its subcellular location is the endosome membrane. Plays a role in T lymphocyte development and the optimal generation of CD4/CD8 double-positive thymocytes. Inhibitor of GSK3A. May act by sequestering GSK3A in cytoplasmic vesicles and impairing its translocation to the nucleus. Consequently, impairs GSK3A-dependent transcriptional program and regulation of the DNA damage response occurring during T cells proliferation. Required for the survival of bone marrow hematopoietic stem cells, as well as of peripheral T cells, natural killer (NK) and NK T-cell development and the maintenance of normal liver function. May promote the survival of mature T lymphocytes upon cytokine withdrawal. May regulate Ca(2+) homeostasis by modulating lysosomal Ca(2+) stores, preventing its accumulation in the absence of T cell activation. May play a role in mitochondrial DNA segregation in hematopoietic tissues. Is a regulator of liver endothelial cell homeostasis. The protein is GTPase IMAP family member 5 (Gimap5) of Mus musculus (Mouse).